The following is a 506-amino-acid chain: Histidine ammonia-lyase (506 aa).

Positions 143 to 145 (ASG) form a cross-link, 5-imidazolinone (Ala-Gly). At Ser144 the chain carries 2,3-didehydroalanine (Ser).

The protein belongs to the PAL/histidase family. Post-translationally, contains an active site 4-methylidene-imidazol-5-one (MIO), which is formed autocatalytically by cyclization and dehydration of residues Ala-Ser-Gly.

It localises to the cytoplasm. It carries out the reaction L-histidine = trans-urocanate + NH4(+). The protein operates within amino-acid degradation; L-histidine degradation into L-glutamate; N-formimidoyl-L-glutamate from L-histidine: step 1/3. In Salmonella paratyphi B (strain ATCC BAA-1250 / SPB7), this protein is Histidine ammonia-lyase.